Here is a 128-residue protein sequence, read N- to C-terminus: Small ribosomal subunit protein uS11 (128 aa).

Belongs to the universal ribosomal protein uS11 family. In terms of assembly, part of the 30S ribosomal subunit. Interacts with proteins S7 and S18. Binds to IF-3.

Located on the platform of the 30S subunit, it bridges several disparate RNA helices of the 16S rRNA. Forms part of the Shine-Dalgarno cleft in the 70S ribosome. The polypeptide is Small ribosomal subunit protein uS11 (Synechococcus sp. (strain JA-2-3B'a(2-13)) (Cyanobacteria bacterium Yellowstone B-Prime)).